Here is a 341-residue protein sequence, read N- to C-terminus: Methionine import ATP-binding protein MetN 2 (341 aa).

Residues Ile-2 to Val-241 form the ABC transporter domain. ATP is bound at residue Gly-38–Ser-45.

Belongs to the ABC transporter superfamily. Methionine importer (TC 3.A.1.24) family. The complex is composed of two ATP-binding proteins (MetN), two transmembrane proteins (MetI) and a solute-binding protein (MetQ).

Its subcellular location is the cell membrane. It catalyses the reaction L-methionine(out) + ATP + H2O = L-methionine(in) + ADP + phosphate + H(+). It carries out the reaction D-methionine(out) + ATP + H2O = D-methionine(in) + ADP + phosphate + H(+). Part of the ABC transporter complex MetNIQ involved in methionine import. Responsible for energy coupling to the transport system. The chain is Methionine import ATP-binding protein MetN 2 from Staphylococcus epidermidis (strain ATCC 35984 / DSM 28319 / BCRC 17069 / CCUG 31568 / BM 3577 / RP62A).